The chain runs to 90 residues: DNA-directed RNA polymerase subunit omega (90 aa).

The tract at residues arginine 69–arginine 90 is disordered.

It belongs to the RNA polymerase subunit omega family. As to quaternary structure, the RNAP catalytic core consists of 2 alpha, 1 beta, 1 beta' and 1 omega subunit. When a sigma factor is associated with the core the holoenzyme is formed, which can initiate transcription.

The catalysed reaction is RNA(n) + a ribonucleoside 5'-triphosphate = RNA(n+1) + diphosphate. Its function is as follows. Promotes RNA polymerase assembly. Latches the N- and C-terminal regions of the beta' subunit thereby facilitating its interaction with the beta and alpha subunits. This chain is DNA-directed RNA polymerase subunit omega, found in Vibrio vulnificus (strain CMCP6).